Consider the following 20-residue polypeptide: 2-oxo-acid reductase (20 aa).

It belongs to the AOR/FOR family. In terms of assembly, forms various types of homooligomers. It depends on [4Fe-4S] cluster as a cofactor. Mo-molybdopterin is required as a cofactor.

It is found in the cell membrane. The catalysed reaction is a (2R)-2-hydroxycarboxylate + A = a 2-oxocarboxylate + AH2. Is inhibited by cyanide. Is sensitive to oxygen. Its function is as follows. Oxidoreductase with an extremely broad substrate specificity that can reduce reversibly 2-oxocarboxylates to (2R)-hydroxycarboxylates. In Proteus hauseri, this protein is 2-oxo-acid reductase.